The chain runs to 238 residues: Small ribosomal subunit protein uS2 (238 aa).

It belongs to the universal ribosomal protein uS2 family.

The chain is Small ribosomal subunit protein uS2 from Chloroflexus aurantiacus (strain ATCC 29366 / DSM 635 / J-10-fl).